The sequence spans 138 residues: uncharacterized protein (138 aa).

Residues 74-96 are disordered; sequence RRRSPSLPARRPPTPREDALEDY. Residues 87–96 are compositionally biased toward basic and acidic residues; sequence TPREDALEDY.

This is an uncharacterized protein from Orgyia pseudotsugata (Douglas-fir tussock moth).